A 413-amino-acid polypeptide reads, in one-letter code: Arginine deiminase (413 aa).

The active-site Amidino-cysteine intermediate is the cysteine 403.

The protein belongs to the arginine deiminase family.

It is found in the cytoplasm. The enzyme catalyses L-arginine + H2O = L-citrulline + NH4(+). The protein operates within amino-acid degradation; L-arginine degradation via ADI pathway; carbamoyl phosphate from L-arginine: step 1/2. This is Arginine deiminase from Clostridium perfringens (strain SM101 / Type A).